Reading from the N-terminus, the 509-residue chain is 2,3-bisphosphoglycerate-independent phosphoglycerate mutase (509 aa).

Residues aspartate 14 and serine 64 each contribute to the Mn(2+) site. Serine 64 acts as the Phosphoserine intermediate in catalysis. Residues histidine 125, arginine 155–aspartate 156, arginine 187, arginine 193, arginine 259–arginine 262, and lysine 332 contribute to the substrate site. Mn(2+) is bound by residues aspartate 399, histidine 403, aspartate 440, histidine 441, and histidine 459.

It belongs to the BPG-independent phosphoglycerate mutase family. Monomer. It depends on Mn(2+) as a cofactor.

The enzyme catalyses (2R)-2-phosphoglycerate = (2R)-3-phosphoglycerate. Its pathway is carbohydrate degradation; glycolysis; pyruvate from D-glyceraldehyde 3-phosphate: step 3/5. Functionally, catalyzes the interconversion of 2-phosphoglycerate and 3-phosphoglycerate. This chain is 2,3-bisphosphoglycerate-independent phosphoglycerate mutase, found in Psychromonas ingrahamii (strain DSM 17664 / CCUG 51855 / 37).